The primary structure comprises 640 residues: F-box protein MET30 (640 aa).

Residues 1–19 (MRRERQRMMSFEDKDKDDL) are compositionally biased toward basic and acidic residues. The interval 1–84 (MRRERQRMMS…ATNDSGTRVQ (84 aa)) is disordered. The segment at 1-299 (MRRERQRMMS…KGHCRIQEFK (299 aa)) is necessary to mediate nuclear localization. 2 stretches are compositionally biased toward polar residues: residues 45-56 (TGSSDDLAQGSS) and 64-82 (ATRSPSSSPDLATNDSGTR). Serine 67 carries the post-translational modification Phosphoserine. An interaction with SKP1/CBF3D region spans residues 180–225 (KIDFISILPQELSLKILSYLDCQSLCNATRVCRKWQKLADDDRVWY). Residues 180–277 (KIDFISILPQ…TQTTRPWKVI (98 aa)) are important for mediating homomultimerization. The 47-residue stretch at 181–227 (IDFISILPQELSLKILSYLDCQSLCNATRVCRKWQKLADDDRVWYHM) folds into the F-box domain. Residues 277 to 640 (IYRERFKVES…VKMYKFDLND (364 aa)) are interaction with MET4. WD repeat units follow at residues 300 to 328 (GHMDGVLTLQFNYRLLFTGSYDSTIGIWD), 340 to 368 (GHSDGVKTLYFDDRKLITGSLDKTIRVWN), 380 to 408 (GHSDSVLSVDSYQKVIVSGSADKTVKVWH), 419 to 449 (GHTEWVNCVKLHPKSFSCFSCSDDTTIRMWD), 461 to 499 (GHVGQVQKIIPLTIKDVENLATDNTSDGSSPQDDPTMTD), 509 to 538 (NEQETVLDENIPYPTHLLSCGLDNTIKLWD), 550 to 578 (GHVEGVWDIAADNFRIISGSHDGSIKVWD), and 607 to 635 (DKVAPIACVCIGDSECFSGDEFGCVKMYK). Residues 481–495 (ATDNTSDGSSPQDDP) are compositionally biased toward polar residues. The tract at residues 481–516 (ATDNTSDGSSPQDDPTMTDGADESDTPSNEQETVLD) is disordered.

The protein belongs to the WD repeat MET30/SCONB/SCON-2 family. As to quaternary structure, homomultimer. Interacts with CDC53 and SKP1/CBF3D to form the E3 ubiquitin ligase complex SCF(Met30). Interacts with MET4.

It localises to the cytoplasm. The protein resides in the nucleus. It functions in the pathway protein modification; protein ubiquitination. Substrate-recognition component of the SCF(Met30) complex, an E3 ubiquitin ligase complex that mediates the ubiquitination and subsequent proteasomal degradation of target proteins. Negatively regulates sulfur amino acids biosynthesis genes expression. Controls cell cycle function (being required for the G1/S transition and M-phase but not the S-phase), sulfur metabolism, and methionine biosynthesis as part of the SCF(Met30) complex. Required for the efficient binding of CDC45 and MCM proteins to origins of replication. Required for efficient expression of G1 cyclins. The SCF(Met30) complex catalyzes ubiquitination and degradation of the Cdk-inhibitory kinase SWE1. Involved in the S-adenosylmethionine (AdoMet)-mediated inhibition of the transcription function of MET4. The SCF(Met30) complex mediates ubiquitination and subsequent degradation of MET4 and the cellular response to cadmium. The SCF(Met30) complex acts as an inhibitor of autophagy by promoting ubiquitination and degradation of ATG9 in normal conditions. The sequence is that of F-box protein MET30 from Saccharomyces cerevisiae (strain ATCC 204508 / S288c) (Baker's yeast).